A 204-amino-acid chain; its full sequence is Pectinesterase inhibitor 9 (204 aa).

The first 23 residues, 1–23 (MELKNTIFLVILLSITILQSSSA), serve as a signal peptide directing secretion. Residue Asn26 is glycosylated (N-linked (GlcNAc...) asparagine). Intrachain disulfides connect Cys38–Cys47 and Cys106–Cys157.

It belongs to the PMEI family. In terms of assembly, binds reversibly to PME3 to inhibit its activity; the stability of the PME3-PMEI9 complex and the inhibition of the pectin methylesterase (PME) activity is pH-dependent, based on protonation status of amino-acids at the complex interface. Highly expressed in roots and etiolated hypocotyls. Expressed in seedlings, leaves, stems, siliques, floral buds and mature seeds.

The protein resides in the secreted. It localises to the extracellular space. The protein localises to the apoplast. Pectin methylesterase (PME) inhibitor that probably targets root-expressed PME and PME3 in a moderate pH-dependent manner, mainly in slightly acidic conditions (pH 6.3 and 5.0) and to some extent at pH 7.5; this processus relies on changes in the protonation of amino acids involved in intermolecular and intramolecular interactions. Regulates de-methylesterification of pectins in roots and affects root growth. The polypeptide is Pectinesterase inhibitor 9 (Arabidopsis thaliana (Mouse-ear cress)).